A 308-amino-acid polypeptide reads, in one-letter code: Isoaspartyl peptidase/L-asparaginase (308 aa).

Met1 bears the N-acetylmethionine mark. The active-site Nucleophile is Thr168. Substrate contacts are provided by residues 196 to 199 and 219 to 222; these read RVGD and TGHG.

It belongs to the Ntn-hydrolase family. Heterodimer of an alpha and beta chain produced by autocleavage. This heterodimer may then dimerize in turn, giving rise to a heterotetramer. In terms of processing, cleaved into an alpha and beta chain by autocatalysis; this activates the enzyme. The N-terminal residue of the beta subunit is responsible for the nucleophile hydrolase activity. Expressed in brain, kidney, testis and tissues of the gastrointestinal tract. Present in sperm (at protein level). Over-expressed in uterine, mammary, prostatic and ovarian carcinoma.

The protein localises to the cytoplasm. It catalyses the reaction L-asparagine + H2O = L-aspartate + NH4(+). The catalysed reaction is Cleavage of a beta-linked Asp residue from the N-terminus of a polypeptide.. Glycine accelerates autocleavage into an alpha and beta chain. Functionally, has both L-asparaginase and beta-aspartyl peptidase activity. May be involved in the production of L-aspartate, which can act as an excitatory neurotransmitter in some brain regions. Is highly active with L-Asp beta-methyl ester. Besides, has catalytic activity toward beta-aspartyl dipeptides and their methyl esters, including beta-L-Asp-L-Phe, beta-L-Asp-L-Phe methyl ester (aspartame), beta-L-Asp-L-Ala, beta-L-Asp-L-Leu and beta-L-Asp-L-Lys. Does not have aspartylglucosaminidase activity and is inactive toward GlcNAc-L-Asn. Likewise, has no activity toward glutamine. The sequence is that of Isoaspartyl peptidase/L-asparaginase (ASRGL1) from Homo sapiens (Human).